The chain runs to 486 residues: Arginine/agmatine antiporter (486 aa).

The next 12 membrane-spanning stretches (helical) occupy residues 12–32 (LGAI…GIFS), 41–61 (AGVG…FFIA), 85–105 (GFGP…QIFG), 132–152 (PAIL…LKGI), 160–180 (IIGT…TAFL), 211–231 (STML…VMSA), 242–262 (ATIL…ILPF), 296–316 (VGLL…VAEI), 341–361 (VSLY…YFST), 367–387 (MLSI…AFLV), 418–438 (IWLI…LLAL), and 461–481 (EVTE…LFST).

The protein belongs to the amino acid-polyamine-organocation (APC) superfamily. Basic amino acid/polyamine antiporter (APA) (TC 2.A.3.2) family.

The protein localises to the cell inner membrane. Its function is as follows. Catalyzes the exchange of L-arginine for agmatine. The arginine uptake by the bacterium in the macrophage may be a virulence factor against the host innate immune response. The protein is Arginine/agmatine antiporter (aaxC) of Chlamydia abortus (strain DSM 27085 / S26/3) (Chlamydophila abortus).